The sequence spans 273 residues: Hydroxyethylthiazole kinase (273 aa).

Met47 is a substrate binding site. Positions 123 and 172 each coordinate ATP. Substrate is bound at residue Gly199.

Belongs to the Thz kinase family. The cofactor is Mg(2+).

The catalysed reaction is 5-(2-hydroxyethyl)-4-methylthiazole + ATP = 4-methyl-5-(2-phosphooxyethyl)-thiazole + ADP + H(+). It participates in cofactor biosynthesis; thiamine diphosphate biosynthesis; 4-methyl-5-(2-phosphoethyl)-thiazole from 5-(2-hydroxyethyl)-4-methylthiazole: step 1/1. Functionally, catalyzes the phosphorylation of the hydroxyl group of 4-methyl-5-beta-hydroxyethylthiazole (THZ). The protein is Hydroxyethylthiazole kinase of Ruminiclostridium cellulolyticum (strain ATCC 35319 / DSM 5812 / JCM 6584 / H10) (Clostridium cellulolyticum).